The chain runs to 144 residues: Small ribosomal subunit protein uS19 (144 aa).

This sequence belongs to the universal ribosomal protein uS19 family.

The polypeptide is Small ribosomal subunit protein uS19 (rps15) (Dictyostelium discoideum (Social amoeba)).